We begin with the raw amino-acid sequence, 314 residues long: tRNA dimethylallyltransferase (314 aa).

An ATP-binding site is contributed by 12–19 (GPTASGKT). Substrate is bound at residue 14-19 (TASGKT). Interaction with substrate tRNA stretches follow at residues 37–40 (DSAL) and 162–166 (QRIIR).

This sequence belongs to the IPP transferase family. Monomer. Mg(2+) is required as a cofactor.

The enzyme catalyses adenosine(37) in tRNA + dimethylallyl diphosphate = N(6)-dimethylallyladenosine(37) in tRNA + diphosphate. In terms of biological role, catalyzes the transfer of a dimethylallyl group onto the adenine at position 37 in tRNAs that read codons beginning with uridine, leading to the formation of N6-(dimethylallyl)adenosine (i(6)A). In Acinetobacter baumannii (strain AB0057), this protein is tRNA dimethylallyltransferase.